Consider the following 786-residue polypeptide: Endonuclease MutS2 (786 aa).

ATP is bound at residue 332–339 (GPNTGGKT). The 76-residue stretch at 711–786 (IDLRGMDSME…GTGVTVVELK (76 aa)) folds into the Smr domain.

It belongs to the DNA mismatch repair MutS family. MutS2 subfamily. In terms of assembly, homodimer. Binds to stalled ribosomes, contacting rRNA.

Functionally, endonuclease that is involved in the suppression of homologous recombination and thus may have a key role in the control of bacterial genetic diversity. In terms of biological role, acts as a ribosome collision sensor, splitting the ribosome into its 2 subunits. Detects stalled/collided 70S ribosomes which it binds and splits by an ATP-hydrolysis driven conformational change. Acts upstream of the ribosome quality control system (RQC), a ribosome-associated complex that mediates the extraction of incompletely synthesized nascent chains from stalled ribosomes and their subsequent degradation. Probably generates substrates for RQC. In Clostridium tetani (strain Massachusetts / E88), this protein is Endonuclease MutS2.